The following is a 589-amino-acid chain: Peptide transporter PTR_A (589 aa).

A disordered region spans residues 1 to 56 (MSETKPAANDLSNVPSASDSDKDNSLDKVHSLEKTGVHEDINKLPSSDLEQLEDDG). Over residues 19–42 (DSDKDNSLDKVHSLEKTGVHEDIN) the composition is skewed to basic and acidic residues. Helical transmembrane passes span 74 to 95 (IPLS…YYGL), 124 to 144 (ALSY…AWIA), 153 to 173 (AICI…ITSI), and 180 to 200 (NTSL…TGGV). An N-linked (GlcNAc...) asparagine glycan is attached at asparagine 233. 8 helical membrane-spanning segments follow: residues 236 to 256 (IQNV…SVIA), 266 to 286 (FWAG…VLLL), 345 to 365 (VYAC…GQMI), 388 to 408 (INAI…YPFI), 420 to 440 (IFWG…LQHF), 467 to 487 (IAIQ…ASIT), 502 to 522 (SFIM…GIAL), and 533 to 553 (WTYT…YIIF).

This sequence belongs to the major facilitator superfamily. Proton-dependent oligopeptide transporter (POT/PTR) (TC 2.A.17) family.

Its subcellular location is the cell membrane. The enzyme catalyses a dipeptide(out) + H(+)(out) = a dipeptide(in) + H(+)(in). It catalyses the reaction an L-amino acid tripeptide(out) + H(+)(out) = an L-amino acid tripeptide(in) + H(+)(in). Its function is as follows. Peptide transporter that exploits the inwardly directed proton motive force to facilitate the cellular uptake of di/tripeptides. The protein is Peptide transporter PTR_A of Candidozyma auris (Yeast).